Reading from the N-terminus, the 148-residue chain is ATP synthase epsilon chain (148 aa).

Belongs to the ATPase epsilon chain family. F-type ATPases have 2 components, CF(1) - the catalytic core - and CF(0) - the membrane proton channel. CF(1) has five subunits: alpha(3), beta(3), gamma(1), delta(1), epsilon(1). CF(0) has three main subunits: a, b and c.

Its subcellular location is the cell inner membrane. Its function is as follows. Produces ATP from ADP in the presence of a proton gradient across the membrane. This Paracoccus denitrificans (strain Pd 1222) protein is ATP synthase epsilon chain.